Consider the following 427-residue polypeptide: MAADRNTGHTEEDKLDVLKSTQTVIHKALEKLGYPEEVYELLKEPMRLLTVKIPVRMDDGSVKIFTGYRAQHNDSVGPTKGGIRFHPNVTEKEVKAVKALSIWMSLKCGIIDLPYGGGKGGIVCDPRDMSFRELERLSRGYVRAISQIVGPTKDVPAPDVFTNSQIMAWMMDEYSRIDEFNSPGFITGKPLVLGGSHGRESATAKGVTICIKEAAKKRGIDIKGARVVVQGFGNAGSYLAKFMHDAGAKVVGISDAYGGLYDPEGLDIDYLLDRRDSFGTVTKLFNDTITNQELLELDCDILVPAAIENQITEENAHNIRAKIVVEAANGPTTLEGTKILSDRDILLVPDVLASAGGVTVSYFEWVQNNQGFYWSEEEVEEKLEKMMVKSFNNIYEMANNRRIDMRLAAYMVGVRKMAEASRFRGWI.

Residues lysine 80 and lysine 107 each coordinate substrate. Lysine 119 serves as the catalytic Proton donor. 2 residues coordinate NAD(+): threonine 203 and asparagine 234. Serine 361 contacts substrate.

Belongs to the Glu/Leu/Phe/Val dehydrogenases family. Homohexamer.

It carries out the reaction L-glutamate + NAD(+) + H2O = 2-oxoglutarate + NH4(+) + NADH + H(+). Its function is as follows. GudB seems to be intrinsically inactive, however spontaneous mutations removing a 9-bp direct repeat within the wild-type gudB sequence activated the GudB protein and allowed more-efficient utilization of amino acids of the glutamate family (called gutB1). This 3 amino acid insertion presumably causes severe destabilization of the fold of the protein, leading to an inactive enzyme that is very quickly degraded. The cryptic GudB serves as a buffer that may compensate for mutations in the rocG gene and that can also be decryptified for the utilization of glutamate as a single carbon source in the absence of arginine. It is unable to synthesize glutamate. The chain is Cryptic catabolic NAD-specific glutamate dehydrogenase GudB from Bacillus subtilis (strain 168).